The chain runs to 186 residues: Large ribosomal subunit protein uL15 (186 aa).

Positions Met-1 to Val-48 are disordered. Positions Arg-21 to Asn-35 are enriched in gly residues.

It belongs to the universal ribosomal protein uL15 family. Part of the 50S ribosomal subunit.

Functionally, binds to the 23S rRNA. This chain is Large ribosomal subunit protein uL15, found in Chlorobaculum tepidum (strain ATCC 49652 / DSM 12025 / NBRC 103806 / TLS) (Chlorobium tepidum).